Reading from the N-terminus, the 198-residue chain is Adenylate kinase (198 aa).

10 to 15 is a binding site for ATP; sequence GAGKGT. An NMP region spans residues 30-59; that stretch reads STGDMLRAAVQAGSEVGKRAKAVMDAGELV. Residues threonine 31, arginine 36, 57 to 59, 85 to 88, and glutamine 92 each bind AMP; these read ELV and GYPR. The segment at 126-142 is LID; sequence KRAEDAKAAGQPVRKDD. Arginine 127 contacts ATP. The AMP site is built by arginine 139 and arginine 150. Alanine 178 serves as a coordination point for ATP.

Belongs to the adenylate kinase family. In terms of assembly, monomer.

It is found in the cytoplasm. The catalysed reaction is AMP + ATP = 2 ADP. The protein operates within purine metabolism; AMP biosynthesis via salvage pathway; AMP from ADP: step 1/1. Functionally, catalyzes the reversible transfer of the terminal phosphate group between ATP and AMP. Plays an important role in cellular energy homeostasis and in adenine nucleotide metabolism. The polypeptide is Adenylate kinase (Mesorhizobium japonicum (strain LMG 29417 / CECT 9101 / MAFF 303099) (Mesorhizobium loti (strain MAFF 303099))).